Here is a 460-residue protein sequence, read N- to C-terminus: Bifunctional protein GlmU (460 aa).

The segment at 1–232 is pyrophosphorylase; it reads MALNVVILAA…AIEVEGANNR (232 aa). UDP-N-acetyl-alpha-D-glucosamine contacts are provided by residues 8–11, lysine 22, glutamine 73, 78–79, 100–102, glycine 137, glutamate 157, asparagine 172, and asparagine 230; these read LAAG, GT, and YGD. Mg(2+) is bound at residue aspartate 102. Asparagine 230 provides a ligand contact to Mg(2+). The linker stretch occupies residues 233-253; that stretch reads VQLAQLERAYQAREAEKLMLA. The segment at 254-460 is N-acetyltransferase; the sequence is GANLRDPSRI…GWQRPVKIKK (207 aa). UDP-N-acetyl-alpha-D-glucosamine contacts are provided by arginine 336 and lysine 354. The active-site Proton acceptor is histidine 366. Residues tyrosine 369 and asparagine 380 each coordinate UDP-N-acetyl-alpha-D-glucosamine. Acetyl-CoA contacts are provided by residues alanine 383, 389 to 390, serine 408, alanine 426, and arginine 443; that span reads NY.

The protein in the N-terminal section; belongs to the N-acetylglucosamine-1-phosphate uridyltransferase family. In the C-terminal section; belongs to the transferase hexapeptide repeat family. Homotrimer. The cofactor is Mg(2+).

It is found in the cytoplasm. The catalysed reaction is alpha-D-glucosamine 1-phosphate + acetyl-CoA = N-acetyl-alpha-D-glucosamine 1-phosphate + CoA + H(+). It carries out the reaction N-acetyl-alpha-D-glucosamine 1-phosphate + UTP + H(+) = UDP-N-acetyl-alpha-D-glucosamine + diphosphate. It functions in the pathway nucleotide-sugar biosynthesis; UDP-N-acetyl-alpha-D-glucosamine biosynthesis; N-acetyl-alpha-D-glucosamine 1-phosphate from alpha-D-glucosamine 6-phosphate (route II): step 2/2. It participates in nucleotide-sugar biosynthesis; UDP-N-acetyl-alpha-D-glucosamine biosynthesis; UDP-N-acetyl-alpha-D-glucosamine from N-acetyl-alpha-D-glucosamine 1-phosphate: step 1/1. The protein operates within bacterial outer membrane biogenesis; LPS lipid A biosynthesis. In terms of biological role, catalyzes the last two sequential reactions in the de novo biosynthetic pathway for UDP-N-acetylglucosamine (UDP-GlcNAc). The C-terminal domain catalyzes the transfer of acetyl group from acetyl coenzyme A to glucosamine-1-phosphate (GlcN-1-P) to produce N-acetylglucosamine-1-phosphate (GlcNAc-1-P), which is converted into UDP-GlcNAc by the transfer of uridine 5-monophosphate (from uridine 5-triphosphate), a reaction catalyzed by the N-terminal domain. The sequence is that of Bifunctional protein GlmU from Shewanella baltica (strain OS185).